A 113-amino-acid chain; its full sequence is Large ribosomal subunit protein bL19 (113 aa).

The protein belongs to the bacterial ribosomal protein bL19 family.

Its function is as follows. This protein is located at the 30S-50S ribosomal subunit interface and may play a role in the structure and function of the aminoacyl-tRNA binding site. In Moorella thermoacetica (strain ATCC 39073 / JCM 9320), this protein is Large ribosomal subunit protein bL19.